The following is a 409-amino-acid chain: Glutamyl-tRNA reductase (409 aa).

Substrate contacts are provided by residues 46 to 49, Ser-88, 93 to 95, and Gln-99; these read TCNR and ENE. Cys-47 acts as the Nucleophile in catalysis. Residue 164–169 coordinates NADP(+); that stretch reads GNGMIA.

It belongs to the glutamyl-tRNA reductase family. Homodimer.

It carries out the reaction (S)-4-amino-5-oxopentanoate + tRNA(Glu) + NADP(+) = L-glutamyl-tRNA(Glu) + NADPH + H(+). Its pathway is porphyrin-containing compound metabolism; protoporphyrin-IX biosynthesis; 5-aminolevulinate from L-glutamyl-tRNA(Glu): step 1/2. In terms of biological role, catalyzes the NADPH-dependent reduction of glutamyl-tRNA(Glu) to glutamate 1-semialdehyde (GSA). The chain is Glutamyl-tRNA reductase from Thermoplasma acidophilum (strain ATCC 25905 / DSM 1728 / JCM 9062 / NBRC 15155 / AMRC-C165).